The chain runs to 286 residues: Ribose-5-phosphate isomerase (286 aa).

Belongs to the ribose 5-phosphate isomerase family.

Its subcellular location is the cytoplasm. The catalysed reaction is aldehydo-D-ribose 5-phosphate = D-ribulose 5-phosphate. Its pathway is carbohydrate degradation; pentose phosphate pathway; D-ribose 5-phosphate from D-ribulose 5-phosphate (non-oxidative stage): step 1/1. The polypeptide is Ribose-5-phosphate isomerase (RKI1) (Mycosarcoma maydis (Corn smut fungus)).